The following is a 135-amino-acid chain: Large ribosomal subunit protein uL16c (135 aa).

It belongs to the universal ribosomal protein uL16 family. Part of the 50S ribosomal subunit.

The protein localises to the plastid. It localises to the chloroplast. This Stigeoclonium helveticum (Green alga) protein is Large ribosomal subunit protein uL16c.